The following is an 84-amino-acid chain: UPF0512 protein O (84 aa).

This sequence belongs to the UPF0512 family.

The polypeptide is UPF0512 protein O (Dictyostelium discoideum (Social amoeba)).